The primary structure comprises 429 residues: UDP-N-acetylglucosamine 1-carboxyvinyltransferase (429 aa).

A phosphoenolpyruvate-binding site is contributed by 22-23 (KN). Arg102 lines the UDP-N-acetyl-alpha-D-glucosamine pocket. The active-site Proton donor is the Cys126. The residue at position 126 (Cys126) is a 2-(S-cysteinyl)pyruvic acid O-phosphothioketal. Residues 131 to 135 (RPVDL), Asp316, and Ile338 contribute to the UDP-N-acetyl-alpha-D-glucosamine site.

The protein belongs to the EPSP synthase family. MurA subfamily.

It is found in the cytoplasm. The catalysed reaction is phosphoenolpyruvate + UDP-N-acetyl-alpha-D-glucosamine = UDP-N-acetyl-3-O-(1-carboxyvinyl)-alpha-D-glucosamine + phosphate. The protein operates within cell wall biogenesis; peptidoglycan biosynthesis. Cell wall formation. Adds enolpyruvyl to UDP-N-acetylglucosamine. The polypeptide is UDP-N-acetylglucosamine 1-carboxyvinyltransferase (Methylocella silvestris (strain DSM 15510 / CIP 108128 / LMG 27833 / NCIMB 13906 / BL2)).